We begin with the raw amino-acid sequence, 245 residues long: Protein FAM133B (245 aa).

Disordered regions lie at residues 19 to 38 and 69 to 245; these read SRGPIQSSGPTIQDYLNRPR and WKKE…SDSP. The segment covering 69–80 has biased composition (basic and acidic residues); that stretch reads WKKELEKHREKL. S82 bears the Phosphoserine mark. Residues 89–102 show a composition bias toward basic residues; sequence KKRQKKKKEKKKSG. The span at 103–119 shows a compositional bias: low complexity; sequence RYSSSSSSSSDSSSSSS. The segment covering 128–140 has biased composition (basic residues); the sequence is QTKRRKKKKSHCH. The segment covering 165–176 has biased composition (basic and acidic residues); the sequence is KDITEREKDTKG. S190, S191, S193, and S195 each carry phosphoserine. Positions 209 to 219 are enriched in basic and acidic residues; it reads SGEERERTTDK. The span at 220-237 shows a compositional bias: basic residues; it reads AKKRRKHKKHSKKKKKKA.

This sequence belongs to the FAM133 family.

This chain is Protein FAM133B (Fam133b), found in Rattus norvegicus (Rat).